The following is a 382-amino-acid chain: Acetylxylan esterase A (382 aa).

The N-terminal stretch at M1 to A21 is a signal peptide. Positions R22 to R31 are excised as a propeptide. Positions G35 to F307 are catalytic. N46 carries N-linked (GlcNAc...) asparagine glycosylation. Residue S152 is the Charge relay system of the active site. An N-linked (GlcNAc...) asparagine glycan is attached at N194. Residues S308–T345 are ser/Thr-rich linker. Positions S313–T345 are enriched in low complexity. The interval S313–G346 is disordered. In terms of domain architecture, CBM1 spans G346–L382.

It belongs to the carbohydrate esterase 1 (CE1) family. AxeA subfamily. As to quaternary structure, monomer. Glycosylated.

Its subcellular location is the secreted. The catalysed reaction is Deacetylation of xylans and xylo-oligosaccharides.. The protein operates within glycan degradation; xylan degradation. With respect to regulation, inactivated by phenylmethylsulfonylfluorid (PMSF), a specific inhibitor of serine esterases. Functionally, acetylxylan esterase involved in the hydrolysis of xylan, a major structural heterogeneous polysaccharide found in plant biomass representing the second most abundant polysaccharide in the biosphere, after cellulose. Degrades acetylated xylans by cleaving acetyl side groups from the hetero-xylan backbone. The chain is Acetylxylan esterase A (axeA) from Talaromyces purpureogenus (Soft rot fungus).